The chain runs to 258 residues: Putative ankyrin repeat domain-containing protein 30B-like (258 aa).

The disordered stretch occupies residues 1–21 (MERLSAAPVKGQTGPERPSPF). 4 ANK repeats span residues 71-100 (KKRTALYWACANGHAEVVTLLVDRKCQLDV), 104-133 (ENRTILMKALQCQREACANILIDSGADPNI), 137-166 (YGNTAVHYAVNSENLSVVAKLLSCGADIEV), and 170-199 (AGHTPLLLAIRKRSEEIVEFLLTKNANANA). Positions 216–258 (KISKNSQNSNPEGTSEGTPDEAAPLAERTPDTAESLVERTPDE) are disordered. Residues 218–232 (SKNSQNSNPEGTSEG) are compositionally biased toward polar residues. Residues 243-258 (RTPDTAESLVERTPDE) show a composition bias toward basic and acidic residues.

This Homo sapiens (Human) protein is Putative ankyrin repeat domain-containing protein 30B-like (ANKRD30BL).